Reading from the N-terminus, the 1226-residue chain is MNQSISSLIKLKFLQSHSNDKNGNKKGGSNVSTGIDKLRESESYRSPFLQLAEIQEHTNNDDDKLDVKECEPTKKHSKLSRIRRKMGRLDLNFRSANEKGSEDDEILVAQHLRNGQDPEEMPFKSENNIDSIEKVPKPDGERVTLTSSGSDNVKRNSKHAPFIPVKPALEKFPSSNRLSRDYRKSQEPTLFNGDRLVPTLPTVSRISTSSSVGSSTAASRYFNPSKRAVVASSSSSSSSIKFNSLHAIPLDATPQIELAKQQDEISKRRFGRRRSRTVDVFDYINKNNTAKNKPPLSPSSFIRTIDEKNTNSLMQDPMGSRGPLLPDDANIISNDTDGAEASHPDHQVLSRSRSQSTSFVQGKGGKRKSIEDEGYHNKLGLPHGSGPTSVYNNKSNANSTITGMSRRSSSIVNALSSFVNLRSSSLSSSRQQHLQQQQQLQQKLDVSLEDLPPVPAPEFSDSCKDFLIKLAPYGKFIGIILTEKDDEFKKNCLNYLLTNCFEFKNDPLDIALRKLLMFLELPKETQQIDRLIMAFSFAYYKAQKSYSKKKGIECPWSNADQVYFIAFSLLMLHTDYFNPNNKSKMTKHDFVDLVHNDKYSGGNEIPMAVLTYFYENVTAKESPKFNYFLMSPMALDDSILDKDAFDTNFAITLSSNSMYSPIDMIKRGSIIPKEASLSPIFYPLTNSISASGIAPSTAASCPPSTSGTINGANLGTANSNSNRPASNSISSYFSYNPSSSSSGNATLVQDDINVYSHIINDTLNEVNLFPEVSKYWNKNALKANLLRNEEHKYEKYYSIMNDTKGGYLRFHKSQLNKLNLPNFEILNDNSRSGCKNSDYKYCKILQMGAIMNLGMPSRKFSIVNSAKIHWKKEFAILTSLGLLICDKMDWINPQMMKDPKSGTTNYIIDFKSGFSFVPGSTIDVYNGLFADRERDSLGKSHFASLVLAYTEHHSTGSHTSNTTAASSSAKHNEGVFEPSSDEEDSITNSTDGTSSVSNGESDNDSVSSSDNQLSSNDSNEDYHSIKDEYPIFEDENADCLLYLHTCHRNFIWKCANKYERDNWIDSINLFSAYDGCYVEIGSIANTICNKRKLTILQRMERLRSIKSAKWEKLKKFESTLMLMGKCVPISTKTKTDMINRIRQLAVRMDWLIYEIKRSELFVSIIKEVTRKQAEKNILEHGKGEEEGQGNNDDSDGIDDIEESFLFNENSLQVCVSDSSYDEYSNE.

Disordered stretches follow at residues His-17–Arg-39 and Arg-113–Lys-158. Over residues Ser-131–Arg-142 the composition is skewed to basic and acidic residues. Thr-277 carries the post-translational modification Phosphothreonine. Disordered stretches follow at residues Asn-311–Ser-405, Ser-954–Tyr-1022, and Leu-1178–Asp-1198. Residues Leu-349–Val-360 show a composition bias toward polar residues. Ser-369 is modified (phosphoserine). The segment covering Gly-386–Ser-405 has biased composition (polar residues). In terms of domain architecture, SEC7 spans Ser-405–Lys-620. The PH domain maps to Ile-844–Asp-1074. Composition is skewed to low complexity over residues Gly-956–Ala-969 and Ser-994–Asp-1017.

The protein localises to the cytoplasm. Inhibited by brefeldin A. Functionally, guanine nucleotide exchange factor for Arf GTPases, stimulating the nucleotide exchange from the GDP-bound to the GTP-bound form. Catalyzes both the GDP release by and the GTP binding to ARF2. Has no exchange activity on Rab GTPases. Involved in vesicular transport. This Saccharomyces cerevisiae (strain ATCC 204508 / S288c) (Baker's yeast) protein is Arf guanine nucleotide exchange factor SYT1 (SYT1).